A 127-amino-acid polypeptide reads, in one-letter code: MIKKIIFGIAILLSLSCFANSTTSDGSKKDAAKTNDGTTQKIIDDFSAYAGTIKPEVRKEIQEYRVEIVDINKKKRELYNSLSKEAQNFLAEQQKYKQKLSISKLPTEDDSPNNTANSKDNKDTDTK.

Positions 1–16 (MIKKIIFGIAILLSLS) are cleaved as a signal peptide. Cys-17 carries N-palmitoyl cysteine lipidation. A lipid anchor (S-diacylglycerol cysteine) is attached at Cys-17. Positions 56 to 101 (EVRKEIQEYRVEIVDINKKKRELYNSLSKEAQNFLAEQQKYKQKLS) form a coiled coil. A disordered region spans residues 101–127 (SISKLPTEDDSPNNTANSKDNKDTDTK).

The protein localises to the cell membrane. This is an uncharacterized protein from Rickettsia felis (strain ATCC VR-1525 / URRWXCal2) (Rickettsia azadi).